The chain runs to 208 residues: Platelet-activating factor receptor (208 aa).

At 1–16 (MEPHDSSHVDSEFRYT) the chain is on the extracellular side. Residues 17–38 (LFPIVYSIIFVLGVIANGYVLW) form a helical membrane-spanning segment. Residues 39–54 (VFARLYPSKKFNEIKI) lie on the Cytoplasmic side of the membrane. The helical transmembrane segment at 55–74 (FMVNLTMADMLFLITLPLWI) threads the bilayer. The Extracellular segment spans residues 75–91 (VYYQNGGNWIFPKFLCN). A disulfide bridge connects residues cysteine 90 and cysteine 173. The helical transmembrane segment at 92–113 (LAGCLFFINTYCSVAFLGVITY) threads the bilayer. The Cytoplasmic portion of the chain corresponds to 114–133 (NRFQAVTRPIKTAQANTRKR). A helical transmembrane segment spans residues 134-155 (GISLSLVIWVAIVGAASYFFIL). Residues 156 to 184 (DSTNTVPNSAGSGNITRCFEHYEKGSVPV) are Extracellular-facing. N-linked (GlcNAc...) asparagine glycosylation is present at asparagine 169. A helical membrane pass occupies residues 185 to 205 (LIIHIFIVFSFFLVFLIILFC). Residues 206-208 (NLV) are Cytoplasmic-facing.

Belongs to the G-protein coupled receptor 1 family. As to quaternary structure, interacts with ARRB1.

Its subcellular location is the cell membrane. In terms of biological role, receptor for platelet activating factor, a chemotactic phospholipid mediator that possesses potent inflammatory, smooth-muscle contractile and hypotensive activity. Seems to mediate its action via a G protein that activates a phosphatidylinositol-calcium second messenger system. The sequence is that of Platelet-activating factor receptor (PTAFR) from Macaca mulatta (Rhesus macaque).